We begin with the raw amino-acid sequence, 162 residues long: NADH-quinone oxidoreductase subunit I (162 aa).

2 4Fe-4S ferredoxin-type domains span residues 52-82 (LRRY…IEAG) and 93-122 (VRYD…EGPN). [4Fe-4S] cluster-binding residues include Cys62, Cys65, Cys68, Cys72, Cys102, Cys105, Cys108, and Cys112.

It belongs to the complex I 23 kDa subunit family. As to quaternary structure, NDH-1 is composed of 14 different subunits. Subunits NuoA, H, J, K, L, M, N constitute the membrane sector of the complex. [4Fe-4S] cluster is required as a cofactor.

The protein resides in the cell inner membrane. It carries out the reaction a quinone + NADH + 5 H(+)(in) = a quinol + NAD(+) + 4 H(+)(out). Its function is as follows. NDH-1 shuttles electrons from NADH, via FMN and iron-sulfur (Fe-S) centers, to quinones in the respiratory chain. The immediate electron acceptor for the enzyme in this species is believed to be ubiquinone. Couples the redox reaction to proton translocation (for every two electrons transferred, four hydrogen ions are translocated across the cytoplasmic membrane), and thus conserves the redox energy in a proton gradient. The polypeptide is NADH-quinone oxidoreductase subunit I (Nitrobacter winogradskyi (strain ATCC 25391 / DSM 10237 / CIP 104748 / NCIMB 11846 / Nb-255)).